The primary structure comprises 201 residues: Molybdenum cofactor guanylyltransferase (201 aa).

GTP is bound by residues 14-16 (LAG), Lys-31, and Asp-104. Asp-104 contacts Mg(2+).

The protein belongs to the MobA family. As to quaternary structure, monomer. Mg(2+) serves as cofactor.

Its subcellular location is the cytoplasm. It catalyses the reaction Mo-molybdopterin + GTP + H(+) = Mo-molybdopterin guanine dinucleotide + diphosphate. In terms of biological role, transfers a GMP moiety from GTP to Mo-molybdopterin (Mo-MPT) cofactor (Moco or molybdenum cofactor) to form Mo-molybdopterin guanine dinucleotide (Mo-MGD) cofactor. The sequence is that of Molybdenum cofactor guanylyltransferase from Helicobacter pylori (strain G27).